Reading from the N-terminus, the 515-residue chain is Peroxisomal catalase A (515 aa).

Residue serine 2 is modified to N-acetylserine. Residues histidine 70 and asparagine 143 contribute to the active site. Residue tyrosine 355 participates in heme binding. The short motif at 513–515 is the Microbody targeting signal element; that stretch reads SKF.

Belongs to the catalase family. As to quaternary structure, homotetramer. Heme is required as a cofactor.

It localises to the peroxisome matrix. It catalyses the reaction 2 H2O2 = O2 + 2 H2O. Its function is as follows. Catalyzes the degradation of hydrogen peroxide (H(2)O(2)) generated by peroxisomal oxidases to water and oxygen, thereby protecting cells from the toxic effects of hydrogen peroxide. The polypeptide is Peroxisomal catalase A (CTA1) (Saccharomyces cerevisiae (strain ATCC 204508 / S288c) (Baker's yeast)).